Reading from the N-terminus, the 41-residue chain is Peroxidase 3 (41 aa).

This sequence belongs to the peroxidase family. Classical plant (class III) peroxidase subfamily. Heme b is required as a cofactor. The cofactor is Ca(2+).

It localises to the secreted. The enzyme catalyses 2 a phenolic donor + H2O2 = 2 a phenolic radical donor + 2 H2O. Removal of H(2)O(2), oxidation of toxic reductants, biosynthesis and degradation of lignin, suberization, auxin catabolism, response to environmental stresses such as wounding, pathogen attack and oxidative stress. These functions might be dependent on each isozyme/isoform in each plant tissue. This Vitis vinifera (Grape) protein is Peroxidase 3.